Consider the following 89-residue polypeptide: Small ribosomal subunit protein uS19 (89 aa).

Belongs to the universal ribosomal protein uS19 family.

Functionally, protein S19 forms a complex with S13 that binds strongly to the 16S ribosomal RNA. This chain is Small ribosomal subunit protein uS19, found in Parabacteroides distasonis (strain ATCC 8503 / DSM 20701 / CIP 104284 / JCM 5825 / NCTC 11152).